The following is a 124-amino-acid chain: SGPWMCYPGQAFQVPALPGCRPLLKLQCNGSQVPEAVLRDCCQQLADISEWPRCGALYSMLDSMYKEHGVSEGQAGTGAFPSCRREVVKLTAASITAVCRLPIVVDASGDGAYVCKDVAAYPDA.

Cystine bridges form between C20-C41, C28-C83, C42-C99, and C54-C115.

The protein belongs to the protease inhibitor I6 (cereal trypsin/alpha-amylase inhibitor) family. As to quaternary structure, homodimer. In terms of processing, the disulfide bonds are essential for the inhibitor activity. Endosperm.

It is found in the secreted. Functionally, alpha-amylase inhibitor. The sequence is that of Alpha-amylase inhibitor 0.53 from Triticum aestivum (Wheat).